The primary structure comprises 603 residues: Matrix metalloproteinase-17 (603 aa).

The first 35 residues, 1 to 35 (MRRRAARGPGPPPPGPGLSRLPLPLLLLLALGTRG), serve as a signal peptide directing secretion. Residues 36–125 (GCAAPAPAPR…PVLTQARRRR (90 aa)) constitute a propeptide that is removed on maturation. Positions 108–115 (PRCSLPDL) match the Cysteine switch motif. C110 contributes to the Zn(2+) binding site. N-linked (GlcNAc...) asparagine glycosylation occurs at N137. H248 provides a ligand contact to Zn(2+). Residue E249 is part of the active site. H252 and H258 together coordinate Zn(2+). The disordered stretch occupies residues 301–329 (SPTAQPEEPPLLPEPPDNRSSAPPRKDVP). Residue N318 is glycosylated (N-linked (GlcNAc...) asparagine). Residues C332 and C523 are joined by a disulfide bond. 4 Hemopexin repeats span residues 333-378 (STHF…WRGL), 382-427 (LDSV…FSLP), 428-475 (PGGI…WRGV), and 476-523 (PSTL…WLVC). The interval 537-571 (DAAEGPRAPPGQHDQSRSEDGYEVCSCTSGASSPP) is disordered. The GPI-anchor amidated serine moiety is linked to residue S565. A propeptide spans 566–603 (GASSPPGAPGPLVAATMLLLLPPLSPGALWTAAQALTL) (removed in mature form).

Belongs to the peptidase M10A family. The cofactor is Zn(2+). Ca(2+) is required as a cofactor. Post-translationally, the precursor is cleaved by a furin endopeptidase. In terms of tissue distribution, expressed in brain, leukocytes, colon, ovary testis and breast cancer. Expressed also in many transformed and non-transformed cell types.

The protein localises to the cell membrane. It is found in the secreted. Its subcellular location is the extracellular space. It localises to the extracellular matrix. In terms of biological role, endopeptidase that degrades various components of the extracellular matrix, such as fibrin. May be involved in the activation of membrane-bound precursors of growth factors or inflammatory mediators, such as tumor necrosis factor-alpha. May also be involved in tumoral process. Cleaves pro-TNF-alpha at the '74-Ala-|-Gln-75' site. Not obvious if able to proteolytically activate progelatinase A. Does not hydrolyze collagen types I, II, III, IV and V, gelatin, fibronectin, laminin, decorin nor alpha1-antitrypsin. The polypeptide is Matrix metalloproteinase-17 (MMP17) (Homo sapiens (Human)).